The primary structure comprises 475 residues: Lipoprotein lipase (475 aa).

Positions 1–27 (MESKALLLVALGMWFQSLTATRGGVAA) are cleaved as a signal peptide. The interaction with GPIHBP1 stretch occupies residues 32 to 53 (GDFIDIESKFALRTPEDTAEDT). A disulfide bridge links Cys-54 with Cys-67. N-linked (GlcNAc...) asparagine glycosylation is present at Asn-70. Residue Tyr-121 is modified to 3'-nitrotyrosine. Ser-159 functions as the Nucleophile in the catalytic mechanism. Residue Asp-183 is the Charge relay system of the active site. Tyr-191 is subject to 3'-nitrotyrosine. Ca(2+)-binding residues include Ala-194, Arg-197, Ser-199, and Asp-202. Cys-243 and Cys-266 are disulfide-bonded. The Charge relay system role is filled by His-268. 2 cysteine pairs are disulfide-bonded: Cys-291-Cys-310 and Cys-302-Cys-305. The PLAT domain maps to 341 to 464 (FHYQVKIHFS…KGKASVVFVK (124 aa)). A 3'-nitrotyrosine modification is found at Tyr-343. N-linked (GlcNAc...) asparagine glycosylation occurs at Asn-386. Positions 417-421 (WSDWW) are important for interaction with lipoprotein particles. Residues 430-434 (KIRVK) form an important for heparin binding region. The tract at residues 443-467 (IFCSREKVSHLQKGKASVVFVKCHD) is interaction with GPIHBP1. Residues Cys-445 and Cys-465 are joined by a disulfide bond.

The protein belongs to the AB hydrolase superfamily. Lipase family. Homodimer. Interacts with GPIHBP1 with 1:1 stoichiometry. Interacts with APOC2; the interaction activates LPL activity in the presence of lipids. Interaction with heparan sulfate proteoglycans is required to protect LPL against loss of activity. Associates with lipoprotein particles in blood plasma. Interacts with LMF1 and SEL1L; interaction with SEL1L is required to prevent aggregation of newly synthesized LPL in the endoplasmic reticulum (ER), and for normal export of LPL from the ER to the extracellular space. Interacts with SORL1; SORL1 acts as a sorting receptor, promoting LPL localization to endosomes and later to lysosomes, leading to degradation of newly synthesized LPL. Post-translationally, tyrosine nitration after lipopolysaccharide (LPS) challenge down-regulates the lipase activity.

It localises to the cell membrane. The protein resides in the secreted. The protein localises to the extracellular space. Its subcellular location is the extracellular matrix. It carries out the reaction a triacylglycerol + H2O = a diacylglycerol + a fatty acid + H(+). The apolipoprotein APOC2 acts as a coactivator of LPL activity. Ca(2+) binding promotes protein stability and formation of the active homodimer. Interaction with GPIHBP1 protects LPL against inactivation by ANGPTL4. Its function is as follows. Key enzyme in triglyceride metabolism. Catalyzes the hydrolysis of triglycerides from circulating chylomicrons and very low density lipoproteins (VLDL), and thereby plays an important role in lipid clearance from the blood stream, lipid utilization and storage. Mediates margination of triglyceride-rich lipoprotein particles in capillaries. Recruited to its site of action on the luminal surface of vascular endothelium by binding to GPIHBP1 and cell surface heparan sulfate proteoglycans. The protein is Lipoprotein lipase (LPL) of Neovison vison (American mink).